The chain runs to 435 residues: Glutamate-1-semialdehyde 2,1-aminomutase (435 aa).

Lys-266 is subject to N6-(pyridoxal phosphate)lysine.

This sequence belongs to the class-III pyridoxal-phosphate-dependent aminotransferase family. HemL subfamily. In terms of assembly, homodimer. Pyridoxal 5'-phosphate is required as a cofactor.

The protein localises to the cytoplasm. It carries out the reaction (S)-4-amino-5-oxopentanoate = 5-aminolevulinate. Its pathway is porphyrin-containing compound metabolism; protoporphyrin-IX biosynthesis; 5-aminolevulinate from L-glutamyl-tRNA(Glu): step 2/2. The polypeptide is Glutamate-1-semialdehyde 2,1-aminomutase (Coxiella burnetii (strain CbuK_Q154) (Coxiella burnetii (strain Q154))).